Consider the following 321-residue polypeptide: Replication factor C small subunit (321 aa).

Position 43–50 (43–50 (GFAGVGKT)) interacts with ATP.

Belongs to the activator 1 small subunits family. RfcS subfamily. As to quaternary structure, heteromultimer composed of small subunits (RfcS) and large subunits (RfcL).

Part of the RFC clamp loader complex which loads the PCNA sliding clamp onto DNA. This Methanosphaera stadtmanae (strain ATCC 43021 / DSM 3091 / JCM 11832 / MCB-3) protein is Replication factor C small subunit.